The primary structure comprises 182 residues: N-alpha-acetyltransferase daf-31 (182 aa).

An N-acetyltransferase domain is found at 1-152 (MNIRCARVDD…DAYAMRRDLA (152 aa)). Residues 162–182 (PADREAYTTAKTTDDKKKNRS) are disordered.

It belongs to the acetyltransferase family. ARD1 subfamily. As to quaternary structure, component of the N-terminal acetyltransferase A (NatA) complex. Expressed in head and tail hypodermal cells, hypodermal seam cells, pharynx, intestine and head and tail neurons.

The enzyme catalyses N-terminal glycyl-[protein] + acetyl-CoA = N-terminal N(alpha)-acetylglycyl-[protein] + CoA + H(+). The catalysed reaction is N-terminal L-alanyl-[protein] + acetyl-CoA = N-terminal N(alpha)-acetyl-L-alanyl-[protein] + CoA + H(+). It catalyses the reaction N-terminal L-seryl-[protein] + acetyl-CoA = N-terminal N(alpha)-acetyl-L-seryl-[protein] + CoA + H(+). It carries out the reaction N-terminal L-valyl-[protein] + acetyl-CoA = N-terminal N(alpha)-acetyl-L-valyl-[protein] + CoA + H(+). The enzyme catalyses N-terminal L-cysteinyl-[protein] + acetyl-CoA = N-terminal N(alpha)-acetyl-L-cysteinyl-[protein] + CoA + H(+). The catalysed reaction is N-terminal L-threonyl-[protein] + acetyl-CoA = N-terminal N(alpha)-acetyl-L-threonyl-[protein] + CoA + H(+). In terms of biological role, catalytic subunit of the N-terminal acetyltransferase A (NatA) complex which displays alpha (N-terminal) acetyltransferase activity. Plays a role in regulating larval development, metabolism and longevity. Functions downstream or alongside daf-3, daf-12 and daf-16 in the dauer formation pathway. Functions upstream of daf-15 to enable animal development. The protein is N-alpha-acetyltransferase daf-31 of Caenorhabditis elegans.